The primary structure comprises 167 residues: Transcription factor E (167 aa).

The region spanning 8-90 is the HTH TFE/IIEalpha-type domain; the sequence is NDKVIRGYLI…LWHLDFSDVE (83 aa).

It belongs to the TFE family. As to quaternary structure, monomer. Interaction with RNA polymerase subunits RpoF and RpoE is necessary for Tfe stimulatory transcription activity. Able to interact with Tbp and RNA polymerase in the absence of DNA promoter. Interacts both with the preinitiation and elongation complexes.

Transcription factor that plays a role in the activation of archaeal genes transcribed by RNA polymerase. Facilitates transcription initiation by enhancing TATA-box recognition by TATA-box-binding protein (Tbp), and transcription factor B (Tfb) and RNA polymerase recruitment. Not absolutely required for transcription in vitro, but particularly important in cases where Tbp or Tfb function is not optimal. It dynamically alters the nucleic acid-binding properties of RNA polymerases by stabilizing the initiation complex and destabilizing elongation complexes. Seems to translocate with the RNA polymerase following initiation and acts by binding to the non template strand of the transcription bubble in elongation complexes. This Methanosarcina acetivorans (strain ATCC 35395 / DSM 2834 / JCM 12185 / C2A) protein is Transcription factor E.